The sequence spans 98 residues: NADH-ubiquinone oxidoreductase chain 4L (98 aa).

Transmembrane regions (helical) follow at residues 1–21 (MSMMYFNIFMAFTVSLVGLLM), 29–49 (SLLCLEGMMLSLFVMMSVTIL), and 61–81 (IILLVFAACEAALGLSLLVMV).

The protein belongs to the complex I subunit 4L family. Core subunit of respiratory chain NADH dehydrogenase (Complex I) which is composed of 45 different subunits.

The protein resides in the mitochondrion inner membrane. It carries out the reaction a ubiquinone + NADH + 5 H(+)(in) = a ubiquinol + NAD(+) + 4 H(+)(out). Functionally, core subunit of the mitochondrial membrane respiratory chain NADH dehydrogenase (Complex I) which catalyzes electron transfer from NADH through the respiratory chain, using ubiquinone as an electron acceptor. Part of the enzyme membrane arm which is embedded in the lipid bilayer and involved in proton translocation. The sequence is that of NADH-ubiquinone oxidoreductase chain 4L (MT-ND4L) from Zalophus californianus (California sealion).